Here is a 514-residue protein sequence, read N- to C-terminus: tRNA-2-methylthio-N(6)-dimethylallyladenosine synthase (514 aa).

Residues 1–21 (MNEEQRKASSVDVLAERDKKA) form a disordered region. Residues 68 to 186 (RTFLIKTYGC…LPEILEEAYL (119 aa)) enclose the MTTase N-terminal domain. [4Fe-4S] cluster-binding residues include cysteine 77, cysteine 113, cysteine 147, cysteine 223, cysteine 227, and cysteine 230. The 232-residue stretch at 209-440 (REGNIKAWVN…KKVGHYSQIA (232 aa)) folds into the Radical SAM core domain. The region spanning 442-505 (SKYEGQTVTV…QYSLNGSFIK (64 aa)) is the TRAM domain.

Belongs to the methylthiotransferase family. MiaB subfamily. As to quaternary structure, monomer. It depends on [4Fe-4S] cluster as a cofactor.

It localises to the cytoplasm. The catalysed reaction is N(6)-dimethylallyladenosine(37) in tRNA + (sulfur carrier)-SH + AH2 + 2 S-adenosyl-L-methionine = 2-methylsulfanyl-N(6)-dimethylallyladenosine(37) in tRNA + (sulfur carrier)-H + 5'-deoxyadenosine + L-methionine + A + S-adenosyl-L-homocysteine + 2 H(+). Functionally, catalyzes the methylthiolation of N6-(dimethylallyl)adenosine (i(6)A), leading to the formation of 2-methylthio-N6-(dimethylallyl)adenosine (ms(2)i(6)A) at position 37 in tRNAs that read codons beginning with uridine. The polypeptide is tRNA-2-methylthio-N(6)-dimethylallyladenosine synthase (Staphylococcus aureus (strain USA300 / TCH1516)).